The primary structure comprises 147 residues: Transthyretin (147 aa).

A signal peptide spans 1–20 (MASHRLLLLCLAGLVFVSEA). A Sulfocysteine modification is found at Cys30. L-thyroxine is bound at residue Lys35. A 4-carboxyglutamate modification is found at Glu62. Ser72 is subject to Phosphoserine. Glu74 contacts L-thyroxine. N-linked (GlcNAc...) asparagine glycosylation occurs at Asn118. An L-thyroxine-binding site is contributed by Ser137.

Belongs to the transthyretin family. Homotetramer. Dimer of dimers. In the homotetramer, subunits assemble around a central channel that can accommodate two ligand molecules. Interacts with RBP4. Sulfonation of the reactive cysteine Cys-30 enhances the stability of the native conformation of TTR, avoiding misassembly of the protein leading to amyloid formation. In terms of tissue distribution, detected in brain.

The protein resides in the secreted. Thyroid hormone-binding protein. Probably transports thyroxine from the bloodstream to the brain. This chain is Transthyretin (TTR), found in Pan troglodytes (Chimpanzee).